A 448-amino-acid chain; its full sequence is Iroquois-class homeodomain protein irx-3 (448 aa).

A DNA-binding region (homeobox; TALE-type) is located at residues 108 to 170 (DPSRPKNATR…NARRRLKKEN (63 aa)). Disordered stretches follow at residues 171 to 250 (KMTW…NAPE) and 387 to 410 (SGTA…DRSS). Residues 195–222 (KHEDDEEIDLENIDTEDIESKEDLDDPD) show a composition bias toward acidic residues. Residues 223-237 (TDIHSDSKTDARSDS) show a composition bias toward basic and acidic residues. The span at 238-248 (EASDGFEDLNA) shows a compositional bias: acidic residues. The segment covering 396–406 (AEPKHSTDSLT) has biased composition (basic and acidic residues).

Belongs to the TALE/IRO homeobox family. As to expression, expressed in the neural plate in overlapping patterns with other irx members, which all share an anterior border of expression. Outside the nervous system and at tailbud stages, expressed in the developing otic vesicle, branchial arches, prospective heart region and pronephros.

It localises to the nucleus. Its function is as follows. Acts partially redundantly with other irx members in neural patterning. Required for formation of the posterior forebrain, midbrain, hindbrain, and to a lesser extent, spinal cord. Both up-regulates and down-regulates gene expression during neural development. Acts early in neural plate development to induce proneural gene expression and specify a neural precursor state. Also up-regulates repressors that prevent neuronal differentiation. Required during at least two stages of pronephros kidney development; during neurula stages, maintains transcription of key renal genes to define the size and identity of the pronephric anlage, probably in part through regulation of bmp-signaling. Subsequently required for proper formation of the intermediate tubule segment of the pronephros. The sequence is that of Iroquois-class homeodomain protein irx-3 from Xenopus tropicalis (Western clawed frog).